A 316-amino-acid polypeptide reads, in one-letter code: Phosphoglycerate mutase-like protein AT74 (316 aa).

Residue His-17 is the Tele-phosphohistidine intermediate of the active site. Residue Glu-106 is the Proton donor/acceptor of the active site. The interval 275-316 (KECETEATEDREEEEEEEGKRVNLLTSSEYSNEPELYNGQCC) is disordered. Positions 279–291 (TEATEDREEEEEE) are enriched in acidic residues.

This sequence belongs to the phosphoglycerate mutase family. As to expression, expressed in roots, leaves, stems, flowers and siliques.

In terms of biological role, phosphoglycerate mutase-like protein lacking PGM activity. May play a role in carbohydrates metabolism. The chain is Phosphoglycerate mutase-like protein AT74 from Arabidopsis thaliana (Mouse-ear cress).